Here is a 398-residue protein sequence, read N- to C-terminus: Phosphoglycerate kinase (398 aa).

Substrate contacts are provided by residues 23–25 (DFN), Arg-38, 61–64 (HLGK), Arg-122, and Arg-155. ATP is bound by residues Lys-206, Gly-297, Glu-328, and 354-357 (GGDS).

The protein belongs to the phosphoglycerate kinase family. As to quaternary structure, monomer.

The protein localises to the cytoplasm. It catalyses the reaction (2R)-3-phosphoglycerate + ATP = (2R)-3-phospho-glyceroyl phosphate + ADP. The protein operates within carbohydrate degradation; glycolysis; pyruvate from D-glyceraldehyde 3-phosphate: step 2/5. This is Phosphoglycerate kinase from Clostridium kluyveri (strain NBRC 12016).